Reading from the N-terminus, the 759-residue chain is 5-methyltetrahydropteroyltriglutamate--homocysteine methyltransferase (759 aa).

Residues 17-20 and lysine 116 contribute to the 5-methyltetrahydropteroyltri-L-glutamate site; that span reads RELK. Residues 430–432 and glutamate 483 each bind L-homocysteine; that span reads IGS. Residues 430–432 and glutamate 483 contribute to the L-methionine site; that span reads IGS. 5-methyltetrahydropteroyltri-L-glutamate contacts are provided by residues 514-515 and tryptophan 560; that span reads RC. Aspartate 598 contacts L-homocysteine. Aspartate 598 lines the L-methionine pocket. Glutamate 604 contacts 5-methyltetrahydropteroyltri-L-glutamate. Positions 641, 643, and 665 each coordinate Zn(2+). The active-site Proton donor is histidine 694. Cysteine 726 provides a ligand contact to Zn(2+).

It belongs to the vitamin-B12 independent methionine synthase family. It depends on Zn(2+) as a cofactor.

It carries out the reaction 5-methyltetrahydropteroyltri-L-glutamate + L-homocysteine = tetrahydropteroyltri-L-glutamate + L-methionine. The protein operates within amino-acid biosynthesis; L-methionine biosynthesis via de novo pathway; L-methionine from L-homocysteine (MetE route): step 1/1. Its function is as follows. Catalyzes the transfer of a methyl group from 5-methyltetrahydrofolate to homocysteine resulting in methionine formation. This chain is 5-methyltetrahydropteroyltriglutamate--homocysteine methyltransferase, found in Lactococcus lactis subsp. lactis (strain IL1403) (Streptococcus lactis).